Reading from the N-terminus, the 323-residue chain is Aldo-keto reductase family 1 member C2 (323 aa).

Residues 20-24 (GFGTY) and Asp-50 each bind NADP(+). Substrate is bound at residue Tyr-24. The active-site Proton donor is Tyr-55. His-117 is a substrate binding site. Residues 166–167 (SN), Gln-190, and 216–222 (YSALGSH) each bind NADP(+). Substrate contacts are provided by His-222 and Trp-227. 270–280 (KSYNEQRIRQN) lines the NADP(+) pocket.

The protein belongs to the aldo/keto reductase family. As to expression, expressed in fetal testes. Expressed in fetal and adult adrenal glands.

It localises to the cytoplasm. The protein localises to the cytosol. It catalyses the reaction a 3alpha-hydroxysteroid + NADP(+) = a 3-oxosteroid + NADPH + H(+). The catalysed reaction is a 3alpha-hydroxysteroid + NAD(+) = a 3-oxosteroid + NADH + H(+). It carries out the reaction 5alpha-androstane-3alpha,17beta-diol + NADP(+) = 17beta-hydroxy-5alpha-androstan-3-one + NADPH + H(+). The enzyme catalyses 5alpha-androstane-3alpha,17beta-diol + NAD(+) = 17beta-hydroxy-5alpha-androstan-3-one + NADH + H(+). It catalyses the reaction 5alpha-androstane-3alpha,17beta-diol + NAD(+) = androsterone + NADH + H(+). The catalysed reaction is 17beta-estradiol + NADP(+) = estrone + NADPH + H(+). It carries out the reaction 17beta-estradiol + NAD(+) = estrone + NADH + H(+). The enzyme catalyses (20S)-hydroxypregn-4-en-3-one + NADP(+) = progesterone + NADPH + H(+). It catalyses the reaction (20S)-hydroxypregn-4-en-3-one + NAD(+) = progesterone + NADH + H(+). The catalysed reaction is androsterone + NADP(+) = 5alpha-androstan-3,17-dione + NADPH + H(+). It carries out the reaction (3beta,5alpha,17beta)-3-hydroxy-androstan-17-yl sulfate + NADP(+) = 5alpha-dihydrotestosterone sulfate + NADPH + H(+). The enzyme catalyses (1R,2R)-1,2-dihydrobenzene-1,2-diol + NADP(+) = catechol + NADPH + H(+). It catalyses the reaction (S)-indan-1-ol + NAD(+) = indan-1-one + NADH + H(+). The catalysed reaction is (S)-indan-1-ol + NADP(+) = indan-1-one + NADPH + H(+). It functions in the pathway steroid metabolism. Inhibited by hexestrol with an IC(50) of 2.8 uM, 1,10-phenanthroline with an IC(50) of 2100 uM, 1,7-phenanthroline with an IC(50) of 1500 uM, flufenamic acid with an IC(50) of 0.9 uM, indomethacin with an IC(50) of 75 uM, ibuprofen with an IC(50) of 6.9 uM, lithocholic acid with an IC(50) of 0.07 uM, ursodeoxycholic acid with an IC(50) of 0.08 uM and chenodeoxycholic acid with an IC(50) of 0.13 uM. The oxidation reaction is inhibited by low micromolar concentrations of NADPH. Its function is as follows. Cytosolic aldo-keto reductase that catalyzes the NADH and NADPH-dependent reduction of ketosteroids to hydroxysteroids. Most probably acts as a reductase in vivo since the oxidase activity measured in vitro is inhibited by physiological concentrations of NADPH. Displays a broad positional specificity acting on positions 3, 17 and 20 of steroids and regulates the metabolism of hormones like estrogens and androgens. Works in concert with the 5-alpha/5-beta-steroid reductases to convert steroid hormones into the 3-alpha/5-alpha and 3-alpha/5-beta-tetrahydrosteroids. Catalyzes the inactivation of the most potent androgen 5-alpha-dihydrotestosterone (5-alpha-DHT) to 5-alpha-androstane-3-alpha,17-beta-diol (3-alpha-diol). Also specifically able to produce 17beta-hydroxy-5alpha-androstan-3-one/5alphaDHT. May also reduce conjugated steroids such as 5alpha-dihydrotestosterone sulfate. Displays affinity for bile acids. The polypeptide is Aldo-keto reductase family 1 member C2 (AKR1C2) (Homo sapiens (Human)).